Here is a 323-residue protein sequence, read N- to C-terminus: MKPEVLLYKSLPDDLRARLDEHFTVTAINGLSPETIAEHGGAGARRRHDRLQQHGGSSAAGENAKLRAASTISVGYDNFDVEALNQRGIVLIDTPTVLTETVADTMMALVLSSARRVVEVAERVKAGEWRRSIGPDWFGIDVHHKKMGILGMGRIGLALAQRAHHGFGMPILYNARKHHEEAESRFNAQYCDLDTLLRESDFLCISLPLTEQTHHMIGREQLAKMKPSAILINAGRGPVVDEQALIAALKDKTIHAAGLDVFEQEPLPVDSELLTLPNVVALPHIGSATHETRYGMARDAVDNLIAALAGKVEKNCVNPQVLR.

Residues 37–62 (AEHGGAGARRRHDRLQQHGGSSAAGE) are disordered. Residues arginine 236 and glutamate 265 contribute to the active site. Histidine 284 serves as the catalytic Proton donor.

This sequence belongs to the D-isomer specific 2-hydroxyacid dehydrogenase family. GhrB subfamily. Homodimer.

The protein localises to the cytoplasm. The enzyme catalyses glycolate + NADP(+) = glyoxylate + NADPH + H(+). It carries out the reaction (R)-glycerate + NAD(+) = 3-hydroxypyruvate + NADH + H(+). It catalyses the reaction (R)-glycerate + NADP(+) = 3-hydroxypyruvate + NADPH + H(+). Catalyzes the NADPH-dependent reduction of glyoxylate and hydroxypyruvate into glycolate and glycerate, respectively. The polypeptide is Glyoxylate/hydroxypyruvate reductase B (tkrA) (Enterobacter agglomerans (Erwinia herbicola)).